A 296-amino-acid chain; its full sequence is Protoheme IX farnesyltransferase (296 aa).

Residues 1 to 9 are Cytoplasmic-facing; the sequence is MMFKQYLQV. Residues 10 to 28 form a helical membrane-spanning segment; the sequence is TKPGIIFGNLISVIGGFLL. The Periplasmic segment spans residues 29 to 37; sequence ASKGSIDYP. Residues 38-56 form a helical membrane-spanning segment; it reads LFIYTLVGVSLVVASGCVF. The Cytoplasmic segment spans residues 57–78; it reads NNYIDRDIDRKMERTKNRVLVK. The chain crosses the membrane as a helical span at residues 79 to 97; that stretch reads GLISPAVSLVYATLLGFAG. Topologically, residues 98-107 are periplasmic; sequence FMLLWFGANP. The helical transmembrane segment at 108-126 threads the bilayer; sequence LACWLGVMGFVVYVGVYSL. The Cytoplasmic portion of the chain corresponds to 127–197; it reads YMKRHSVYGT…YQAANIPVLP (71 aa). The helical transmembrane segment at 198-216 threads the bilayer; sequence VVKGISVAKNHITLYIIAF. Residues 217–228 are Periplasmic-facing; the sequence is AVATLMLSLGGY. A helical transmembrane segment spans residues 229-247; that stretch reads AGYKYLVVAAAVSVWWLGM. The Cytoplasmic segment spans residues 248–268; it reads ALRGYKVADDRIWARKLFGFS. A helical membrane pass occupies residues 269-287; that stretch reads IIAITALSVMMSVDFMVPD. The Periplasmic segment spans residues 288-296; the sequence is SHTLLAAVW.

Belongs to the UbiA prenyltransferase family. Protoheme IX farnesyltransferase subfamily.

It is found in the cell inner membrane. It carries out the reaction heme b + (2E,6E)-farnesyl diphosphate + H2O = Fe(II)-heme o + diphosphate. The protein operates within porphyrin-containing compound metabolism; heme O biosynthesis; heme O from protoheme: step 1/1. In terms of biological role, converts heme B (protoheme IX) to heme O by substitution of the vinyl group on carbon 2 of heme B porphyrin ring with a hydroxyethyl farnesyl side group. This Shigella sonnei (strain Ss046) protein is Protoheme IX farnesyltransferase.